Here is a 335-residue protein sequence, read N- to C-terminus: Sphingomyelinase C (335 aa).

The N-terminal stretch at 1–28 (MEKFKIIKTIPKICGAFIFLLFFTFLFG) is a signal peptide.

The protein belongs to the neutral sphingomyelinase family.

It is found in the secreted. It carries out the reaction a sphingomyelin + H2O = phosphocholine + an N-acylsphing-4-enine + H(+). Virulence factor that promotes intracellular proliferation by mediating the disruption of the phagocytic vacuole and the release of bacteria into the host cell cytosol. May act in concert with the phospholipases PlcA and PlcB and the hemolysin hly to mediate efficient escape from the vacuole. The sequence is that of Sphingomyelinase C (smcL) from Listeria ivanovii.